We begin with the raw amino-acid sequence, 586 residues long: Ferredoxin--nitrite reductase, chloroplastic (586 aa).

Low complexity predominate over residues 1–18 (MTSFSLTFTSPLLPSSST). The segment at 1–20 (MTSFSLTFTSPLLPSSSTKP) is disordered. The transit peptide at 1 to 25 (MTSFSLTFTSPLLPSSSTKPKRSVL) directs the protein to the chloroplast. Residue Lys-103 forms a Glycyl lysine isopeptide (Lys-Gly) (interchain with G-Cter in ubiquitin) linkage. The [4Fe-4S] cluster site is built by Cys-464, Cys-470, Cys-505, and Cys-509. A siroheme-binding site is contributed by Cys-509.

Belongs to the nitrite and sulfite reductase 4Fe-4S domain family. Monomer. The cofactor is siroheme. [4Fe-4S] cluster is required as a cofactor.

It localises to the plastid. The protein localises to the chloroplast. It carries out the reaction 6 oxidized [2Fe-2S]-[ferredoxin] + NH4(+) + 2 H2O = nitrite + 6 reduced [2Fe-2S]-[ferredoxin] + 8 H(+). Its pathway is nitrogen metabolism; nitrate reduction (assimilation). Catalyzes the six-electron reduction of nitrite to ammonium. This chain is Ferredoxin--nitrite reductase, chloroplastic (NIR1), found in Arabidopsis thaliana (Mouse-ear cress).